A 443-amino-acid polypeptide reads, in one-letter code: D-alanyl-D-alanine carboxypeptidase DacA (443 aa).

A signal peptide spans 1-31 (MNIKKCKQLLMSLVVLTLAVTCLAPMSKAKA). S67 (acyl-ester intermediate) is an active-site residue. K70 serves as the catalytic Proton acceptor. S131 is a catalytic residue. Residue K258 participates in substrate binding.

Belongs to the peptidase S11 family.

Its subcellular location is the secreted. It is found in the cell wall. The protein localises to the cell membrane. The protein resides in the membrane raft. The enzyme catalyses Preferential cleavage: (Ac)2-L-Lys-D-Ala-|-D-Ala. Also transpeptidation of peptidyl-alanyl moieties that are N-acyl substituents of D-alanine.. The protein operates within cell wall biogenesis; peptidoglycan biosynthesis. In terms of biological role, removes C-terminal D-alanyl residues from sugar-peptide cell wall precursors. The polypeptide is D-alanyl-D-alanine carboxypeptidase DacA (dacA) (Bacillus subtilis (strain 168)).